The sequence spans 444 residues: E1B 55 kDa protein (444 aa).

A disordered region spans residues 1-27 (MEQDSDLESGRATNQRPPRVRVRGAGV). 2 positions are modified to phosphoserine: S438 and S439.

This sequence belongs to the adenoviridae E1B 55 kDa protein family. In terms of assembly, interacts with host PML-4 and PML-5; this interaction promotes efficient subnuclear targeting of E1B-55K to PML nuclear bodies. Interacts with E4-ORF3 protein. Interacts with E4-ORF6 protein.

It is found in the host nucleus. Its subcellular location is the host cytoplasm. Plays a major role to prevent cellular inhibition of viral genome replication. Assembles an SCF-like E3 ubiquitin ligase complex based on the cellular proteins ELOB, ELOC, CUL5 and RBX1, in cooperation with viral E4orf6. This viral RING-type ligase ubiquitinates cellular substrates and targets them to proteasomal degradation: TP53/p53, LIG4, MRE11-RAD50-NBS1 (MRN) complex, ITGA3, DAXX and BLM. E1B-55K probably acts as the substrate-specific adapter of the SCF-like E3 ubiquitin ligase complex. Degradation of host TP53/p53 activity is essential for preventing E1A-induced TP53 accumulation that would otherwise lead to cell apoptosis and growth arrest. E1B-55K also inactivates TP53 transcription-factor activity by binding its transactivation domain. E1B-55K also functions as a SUMO1 E3 ligase for TP53 which causes the latter to be sequestered in promyelocytic leukemia (PML) nuclear bodies thereby contributing to maximal inhibition of TP53 function. In Canis lupus familiaris (Dog), this protein is E1B 55 kDa protein.